We begin with the raw amino-acid sequence, 272 residues long: Prephenate dehydratase (272 aa).

Residues 4 to 179 (AVIYTLPKGT…NKTRFILIGK (176 aa)) enclose the Prephenate dehydratase domain. Positions 194-269 (IVFELKEDKP…TFINLLGKYP (76 aa)) constitute an ACT domain.

Homodimer.

The enzyme catalyses prephenate + H(+) = 3-phenylpyruvate + CO2 + H2O. The protein operates within amino-acid biosynthesis; L-phenylalanine biosynthesis; phenylpyruvate from prephenate: step 1/1. With respect to regulation, inhibited by L-phenylalanine but not by L-tyrosine or L-tryptophan. The polypeptide is Prephenate dehydratase (pheA) (Methanocaldococcus jannaschii (strain ATCC 43067 / DSM 2661 / JAL-1 / JCM 10045 / NBRC 100440) (Methanococcus jannaschii)).